We begin with the raw amino-acid sequence, 144 residues long: Crossover junction endodeoxyribonuclease Hjc (144 aa).

Glu12 is a binding site for Mg(2+). Residue Ser32 is part of the active site. Residues Asp42 and Glu55 each coordinate Mg(2+).

Belongs to the Holliday junction resolvase Hjc family. Homodimer; forms a 2:1 complex with Hel308 (Hjm). May form a complex with Holliday junction DNA, Hjc and Hjm. Mg(2+) is required as a cofactor.

The catalysed reaction is Endonucleolytic cleavage at a junction such as a reciprocal single-stranded crossover between two homologous DNA duplexes (Holliday junction).. With respect to regulation, cleavage stimulated by PCNA123 and PCNA323 and by RadC2. In terms of biological role, a structure-specific endonuclease that resolves Holliday junction (HJ) intermediates during genetic recombination. Cleaves 4-way DNA junctions introducing paired nicks in opposing strands, leaving a 5'-terminal phosphate and a 3'-terminal hydroxyl group that are subsequently ligated to produce recombinant products. Inhibits the helicase activity of Hel308 (Hjm). The sequence is that of Crossover junction endodeoxyribonuclease Hjc from Sulfurisphaera tokodaii (strain DSM 16993 / JCM 10545 / NBRC 100140 / 7) (Sulfolobus tokodaii).